The following is a 264-amino-acid chain: Apolipoprotein A-I (264 aa).

Residues 1-18 form the signal peptide; sequence MRVVVVTLALLFLTGTQA. Repeat copies occupy residues 67-88 and 89-110. The 10 X approximate tandem repeats stretch occupies residues 67 to 264; the sequence is LKLADNLDTL…LLDELQKTVA (198 aa). Residues 111 to 121 form a 3; half-length repeat; that stretch reads KDLEEVKEKIR. Tandem repeats lie at residues 122 to 143, 144 to 165, 166 to 187, 188 to 209, and 210 to 231. The 9; half-length repeat unit spans residues 232-242; it reads PLVQDFKERLT. Repeat unit 10 spans residues 243–264; sequence PYAENLKTRFISLLDELQKTVA.

This sequence belongs to the apolipoprotein A1/A4/E family. In terms of tissue distribution, major protein of plasma HDL, also found in chylomicrons.

The protein localises to the secreted. Its function is as follows. Participates in the reverse transport of cholesterol from tissues to the liver for excretion by promoting cholesterol efflux from tissues and by acting as a cofactor for the lecithin cholesterol acyltransferase (LCAT). This chain is Apolipoprotein A-I (APOA1), found in Anas platyrhynchos (Mallard).